A 141-amino-acid polypeptide reads, in one-letter code: Large ribosomal subunit protein uL16 (141 aa).

Belongs to the universal ribosomal protein uL16 family. In terms of assembly, part of the 50S ribosomal subunit.

Functionally, binds 23S rRNA and is also seen to make contacts with the A and possibly P site tRNAs. This chain is Large ribosomal subunit protein uL16, found in Rhodospirillum centenum (strain ATCC 51521 / SW).